Here is a 199-residue protein sequence, read N- to C-terminus: Imidazoleglycerol-phosphate dehydratase (199 aa).

The protein belongs to the imidazoleglycerol-phosphate dehydratase family.

The protein resides in the cytoplasm. It catalyses the reaction D-erythro-1-(imidazol-4-yl)glycerol 3-phosphate = 3-(imidazol-4-yl)-2-oxopropyl phosphate + H2O. Its pathway is amino-acid biosynthesis; L-histidine biosynthesis; L-histidine from 5-phospho-alpha-D-ribose 1-diphosphate: step 6/9. In Lactococcus lactis subsp. cremoris (strain MG1363), this protein is Imidazoleglycerol-phosphate dehydratase.